Reading from the N-terminus, the 325-residue chain is MSEQVDLRHDWTLAEIEALLQSPLMDLLWKAQAVHRSANPGYKVQLASLLSVKTGGCEEDCAYCPQSMHHSSDVTGQPDLEVKAVLDRARVAAEAGADRFCMGWAWREIREGPAFESMLSMVRGVRELGLEACVTAGMLTDSQAERLAEAGLTAYNHNLDTSPEHYDSIITTRTYQERLETLQRVRQAGVTLCCGGIIGMGESVRDRASMLQVLACLDPHPESVPINALVAVEGTPLEAQPSIDPLELVRMVAVARILMPQSRVRLSAGREQLNREAQILCLQAGADSIFYGDSLLTTSNPAVESDRALLAAAGVQASWHESAAA.

The Radical SAM core domain maps to Y42–R270. [4Fe-4S] cluster-binding residues include C57, C61, and C64. [2Fe-2S] cluster contacts are provided by C101, C133, C193, and R265.

This sequence belongs to the radical SAM superfamily. Biotin synthase family. In terms of assembly, homodimer. [4Fe-4S] cluster is required as a cofactor. [2Fe-2S] cluster serves as cofactor.

It catalyses the reaction (4R,5S)-dethiobiotin + (sulfur carrier)-SH + 2 reduced [2Fe-2S]-[ferredoxin] + 2 S-adenosyl-L-methionine = (sulfur carrier)-H + biotin + 2 5'-deoxyadenosine + 2 L-methionine + 2 oxidized [2Fe-2S]-[ferredoxin]. The protein operates within cofactor biosynthesis; biotin biosynthesis; biotin from 7,8-diaminononanoate: step 2/2. Its function is as follows. Catalyzes the conversion of dethiobiotin (DTB) to biotin by the insertion of a sulfur atom into dethiobiotin via a radical-based mechanism. The protein is Biotin synthase of Synechococcus sp. (strain WH7803).